We begin with the raw amino-acid sequence, 349 residues long: Glycerol-3-phosphate dehydrogenase [NAD(P)+] (349 aa).

NADPH contacts are provided by Ser-31, Phe-32, Arg-52, Lys-53, and Lys-126. Sn-glycerol 3-phosphate is bound by residues Lys-126, Gly-154, and Ser-156. Position 158 (Ala-158) interacts with NADPH. Sn-glycerol 3-phosphate-binding residues include Lys-209, Asp-262, Ser-272, Arg-273, and Asn-274. Lys-209 acts as the Proton acceptor in catalysis. Arg-273 serves as a coordination point for NADPH. Residues Val-297 and Glu-299 each coordinate NADPH.

Belongs to the NAD-dependent glycerol-3-phosphate dehydrogenase family.

Its subcellular location is the cytoplasm. It carries out the reaction sn-glycerol 3-phosphate + NAD(+) = dihydroxyacetone phosphate + NADH + H(+). It catalyses the reaction sn-glycerol 3-phosphate + NADP(+) = dihydroxyacetone phosphate + NADPH + H(+). The protein operates within membrane lipid metabolism; glycerophospholipid metabolism. In terms of biological role, catalyzes the reduction of the glycolytic intermediate dihydroxyacetone phosphate (DHAP) to sn-glycerol 3-phosphate (G3P), the key precursor for phospholipid synthesis. The polypeptide is Glycerol-3-phosphate dehydrogenase [NAD(P)+] (Clostridium tetani (strain Massachusetts / E88)).